Consider the following 166-residue polypeptide: Large ribosomal subunit protein uL10 (166 aa).

Belongs to the universal ribosomal protein uL10 family. As to quaternary structure, part of the ribosomal stalk of the 50S ribosomal subunit. The N-terminus interacts with L11 and the large rRNA to form the base of the stalk. The C-terminus forms an elongated spine to which L12 dimers bind in a sequential fashion forming a multimeric L10(L12)X complex.

Its function is as follows. Forms part of the ribosomal stalk, playing a central role in the interaction of the ribosome with GTP-bound translation factors. The sequence is that of Large ribosomal subunit protein uL10 from Shouchella clausii (strain KSM-K16) (Alkalihalobacillus clausii).